Consider the following 619-residue polypeptide: MPHYRSRTSTHGRNMAGARALWRATGMKDGDFGKPIIAVVNSFTQFVPGHVHLRDLGALVAREIEAAGGVAKEFNTIAVDDGIAMGHGGMLYSLPSRELIADSVEYMVNAHCADAMVCISNCDKITPGMLMAAMRLNIPVVFVSGGPMEAGKITSPVDGKVIAKLDLVDAMIKAADPNVSDAEAEEVERSACPTCGSCSGMFTANSMNCLTEAIGLALPGNGTIVATHAWRKGLFEQAGRLVVELCRRYYEQDDASVLPRSIATKSAFENAMTLDVAMGGSTNTVLHLLAAAQEAGVDFTMSDIDRISRRVPCLCKAAPATDKYHIEDVHRAGGILGILGELGRADLLDLSCGNVHSGTLGEAINQWDINGGAGEAAQKFFRAAPGGIPTTVAFSQDATFLTLDMDRQTGCIRDKAHAYSQDGGLAVLYGNLAEKGCIVKTAGVDESQWVFTGRARVFESQEDAVEGILGDRVQAGDVVIIRYEGPKGGPGMQEMLYPTSYLKSKGLGKTCALFTDGRFSGGSSGLVIGHASPEAAEGGTIGLVEEGDTIEIDIPNRRIHLAVGDTVLAERRAAMQARGEQAWQPVDRERVVSQALRAYAALATSADRGAVRDLSQLKR.

Asp81 is a Mg(2+) binding site. Cys122 is a [2Fe-2S] cluster binding site. Mg(2+) is bound by residues Asp123 and Lys124. Lys124 is subject to N6-carboxylysine. [2Fe-2S] cluster is bound at residue Cys198. A Mg(2+)-binding site is contributed by Glu494. The active-site Proton acceptor is the Ser520.

Belongs to the IlvD/Edd family. Homodimer. [2Fe-2S] cluster serves as cofactor. Requires Mg(2+) as cofactor.

It catalyses the reaction (2R)-2,3-dihydroxy-3-methylbutanoate = 3-methyl-2-oxobutanoate + H2O. It carries out the reaction (2R,3R)-2,3-dihydroxy-3-methylpentanoate = (S)-3-methyl-2-oxopentanoate + H2O. It participates in amino-acid biosynthesis; L-isoleucine biosynthesis; L-isoleucine from 2-oxobutanoate: step 3/4. Its pathway is amino-acid biosynthesis; L-valine biosynthesis; L-valine from pyruvate: step 3/4. In terms of biological role, functions in the biosynthesis of branched-chain amino acids. Catalyzes the dehydration of (2R,3R)-2,3-dihydroxy-3-methylpentanoate (2,3-dihydroxy-3-methylvalerate) into 2-oxo-3-methylpentanoate (2-oxo-3-methylvalerate) and of (2R)-2,3-dihydroxy-3-methylbutanoate (2,3-dihydroxyisovalerate) into 2-oxo-3-methylbutanoate (2-oxoisovalerate), the penultimate precursor to L-isoleucine and L-valine, respectively. The sequence is that of Dihydroxy-acid dehydratase 1 from Bordetella pertussis (strain Tohama I / ATCC BAA-589 / NCTC 13251).